The sequence spans 603 residues: Sabinene hydrate synthase, chloroplastic (603 aa).

Residues 1–47 (MSTISINHVGLLRNPLHGKSKRASINKSWSLCLPRSSSASRLVKPCR) constitute a chloroplast transit peptide. Residues D357 and D361 each contribute to the Mn(2+) site. A DDXXD motif motif is present at residues 357–361 (DDVYD). Homodimerization regions lie at residues 363 to 369 (YGTLDEL) and 435 to 472 (EAEWYESGYAPSLEEYLSIASISIGVIPIVIPLEVSIP). D501 and E509 together coordinate Mn(2+).

The protein belongs to the terpene synthase family. As to quaternary structure, homodimer. The cofactor is Mn(2+). It depends on Mg(2+) as a cofactor.

The protein resides in the plastid. The protein localises to the chloroplast. It catalyses the reaction (2E)-geranyl diphosphate + H2O = sabinene hydrate + diphosphate. The protein operates within secondary metabolite biosynthesis; terpenoid biosynthesis. Functionally, involved in the biosynthesis of phenolic monoterpenes natural products. Monoterpene synthase which catalyzes the conversion of geranyl diphosphate (GPP) to sabinene hydrate, mainly (Z)-sabinene hydrate and to a lower extent (E)-sabinene hydrate, and the formation of minor amounts and traces of several other monoterpenes (e.g. mainly alpha-thujene, alpha-pinene and myrcene). This chain is Sabinene hydrate synthase, chloroplastic, found in Thymus vulgaris (Thyme).